We begin with the raw amino-acid sequence, 936 residues long: Protocadherin gamma-A10 (936 aa).

The first 32 residues, 1–32 (MAAQRNRSKESKDCSGLVLLCLFFGIPWEAGA), serve as a signal peptide directing secretion. Cadherin domains are found at residues 33-137 (RQIS…APTF), 138-246 (QAEN…APVF), 247-351 (TLPE…SPEL), 352-456 (TITS…PPTF), 457-566 (SQVS…APEI), and 574-687 (DGST…SPAN). Over 33 to 696 (RQISYSIPEE…NSETSDLTLY (664 aa)) the chain is Extracellular. N-linked (GlcNAc...) asparagine glycosylation occurs at Asn51. 2 N-linked (GlcNAc...) asparagine glycosylation sites follow: Asn423 and Asn549. Residues 697-717 (LVVAVAAVSCVFLAFVIVLLA) traverse the membrane as a helical segment. Residues 718 to 936 (LRLRRWHKSR…KKKSGKKEKK (219 aa)) lie on the Cytoplasmic side of the membrane. 2 disordered regions span residues 801–845 (SKFP…WPNN) and 906–936 (ATLT…KEKK). Positions 820–845 (WRFSQAQRPGTSGSQNGDDTGTWPNN) are enriched in polar residues. Over residues 926-936 (NKKKSGKKEKK) the composition is skewed to basic residues.

It localises to the cell membrane. Potential calcium-dependent cell-adhesion protein. May be involved in the establishment and maintenance of specific neuronal connections in the brain. The polypeptide is Protocadherin gamma-A10 (PCDHGA10) (Pan troglodytes (Chimpanzee)).